A 408-amino-acid polypeptide reads, in one-letter code: Succinylornithine transaminase (408 aa).

The residue at position 252 (Lys252) is an N6-(pyridoxal phosphate)lysine.

The protein belongs to the class-III pyridoxal-phosphate-dependent aminotransferase family. AstC subfamily. The cofactor is pyridoxal 5'-phosphate.

The catalysed reaction is N(2)-succinyl-L-ornithine + 2-oxoglutarate = N-succinyl-L-glutamate 5-semialdehyde + L-glutamate. Its pathway is amino-acid degradation; L-arginine degradation via AST pathway; L-glutamate and succinate from L-arginine: step 3/5. Catalyzes the transamination of N(2)-succinylornithine and alpha-ketoglutarate into N(2)-succinylglutamate semialdehyde and glutamate. Can also act as an acetylornithine aminotransferase. In Salmonella paratyphi B (strain ATCC BAA-1250 / SPB7), this protein is Succinylornithine transaminase.